The chain runs to 394 residues: Probable fatty acid methyltransferase (394 aa).

S-adenosyl-L-methionine contacts are provided by residues 128 to 129, 163 to 171, and 189 to 194; these read YS, LLDVGCGWG, and TLSKEQ. Residue cysteine 358 is part of the active site.

This sequence belongs to the CFA/CMAS family.

In Pseudomonas putida (Arthrobacter siderocapsulatus), this protein is Probable fatty acid methyltransferase.